Here is a 147-residue protein sequence, read N- to C-terminus: Testis-expressed protein 29 (147 aa).

The Extracellular portion of the chain corresponds to 1 to 57 (MRYAPEFKKSPSHLLKKFAVCDIPLYDICDYNVSRDRCKELGCCFYKGICYEKAVPS). A helical transmembrane segment spans residues 58 to 78 (YVQVFSALIVIIAGAFVITII). Residues 79–147 (YRVIQESRRE…IVTEEEETED (69 aa)) are Cytoplasmic-facing. The tract at residues 86–147 (RREKEVPTEA…IVTEEEETED (62 aa)) is disordered. A compositionally biased stretch (polar residues) spans 99-108 (AKSSVQVETQ). Positions 109–120 (PPSSAGAGSKAP) are enriched in low complexity. Residues 125-135 (PQSKESGREDA) show a composition bias toward basic and acidic residues.

Its subcellular location is the membrane. This chain is Testis-expressed protein 29 (TEX29), found in Bos taurus (Bovine).